The chain runs to 168 residues: Crossover junction endodeoxyribonuclease RuvC (168 aa).

Residues Asp7, Glu66, and Asp138 contribute to the active site. 3 residues coordinate Mg(2+): Asp7, Glu66, and Asp138.

This sequence belongs to the RuvC family. In terms of assembly, homodimer which binds Holliday junction (HJ) DNA. The HJ becomes 2-fold symmetrical on binding to RuvC with unstacked arms; it has a different conformation from HJ DNA in complex with RuvA. In the full resolvosome a probable DNA-RuvA(4)-RuvB(12)-RuvC(2) complex forms which resolves the HJ. Mg(2+) is required as a cofactor.

Its subcellular location is the cytoplasm. It catalyses the reaction Endonucleolytic cleavage at a junction such as a reciprocal single-stranded crossover between two homologous DNA duplexes (Holliday junction).. Its function is as follows. The RuvA-RuvB-RuvC complex processes Holliday junction (HJ) DNA during genetic recombination and DNA repair. Endonuclease that resolves HJ intermediates. Cleaves cruciform DNA by making single-stranded nicks across the HJ at symmetrical positions within the homologous arms, yielding a 5'-phosphate and a 3'-hydroxyl group; requires a central core of homology in the junction. The consensus cleavage sequence is 5'-(A/T)TT(C/G)-3'. Cleavage occurs on the 3'-side of the TT dinucleotide at the point of strand exchange. HJ branch migration catalyzed by RuvA-RuvB allows RuvC to scan DNA until it finds its consensus sequence, where it cleaves and resolves the cruciform DNA. This is Crossover junction endodeoxyribonuclease RuvC from Cereibacter sphaeroides (strain ATCC 17023 / DSM 158 / JCM 6121 / CCUG 31486 / LMG 2827 / NBRC 12203 / NCIMB 8253 / ATH 2.4.1.) (Rhodobacter sphaeroides).